The primary structure comprises 1340 residues: TSET complex member tstE (1340 aa).

The segment covering 56–67 (NQSQTSPNSNDG) has biased composition (low complexity). Disordered regions lie at residues 56–75 (NQSQ…GSGG) and 110–131 (SGSG…GGGQ). WD repeat units lie at residues 208 to 246 (VNQI…VIGK), 250 to 294 (DPTE…LQTI), 345 to 384 (GHKK…SFLN), and 397 to 436 (IEHS…NPQE). Polar residues predominate over residues 1216-1251 (KSHMSSTTTLRRSPSIENIRTTSTTFDSSKFNTDNQ). Positions 1216–1340 (KSHMSSTTTL…TPTPTTTLSS (125 aa)) are disordered. Acidic residues predominate over residues 1252–1275 (ELFDDDSDDDSDSGADADVDSENE). A compositionally biased stretch (polar residues) spans 1286–1318 (ASLQHNDNSSLTNITVTDNDSNLDQDITSNTGS). Residues 1328–1340 (LSSTPTPTTTLSS) show a composition bias toward low complexity.

In terms of assembly, component of the TSET complex, a heterohexamer composed of tstA, tstB, tstC, tstD, tstE and tstF, which may act in plasma membrane turnover. tstA, tstB, tstC and tstD are likely to be the core complex members with tstE and tstF acting as associated scaffold proteins.

This is TSET complex member tstE from Dictyostelium discoideum (Social amoeba).